The following is a 90-amino-acid chain: Small ribosomal subunit protein uS15 (90 aa).

Belongs to the universal ribosomal protein uS15 family. In terms of assembly, part of the 30S ribosomal subunit. Forms a bridge to the 50S subunit in the 70S ribosome, contacting the 23S rRNA.

In terms of biological role, one of the primary rRNA binding proteins, it binds directly to 16S rRNA where it helps nucleate assembly of the platform of the 30S subunit by binding and bridging several RNA helices of the 16S rRNA. Its function is as follows. Forms an intersubunit bridge (bridge B4) with the 23S rRNA of the 50S subunit in the ribosome. The polypeptide is Small ribosomal subunit protein uS15 (Campylobacter lari (strain RM2100 / D67 / ATCC BAA-1060)).